Consider the following 1002-residue polypeptide: ToxR-activated gene A lipoprotein (1002 aa).

The first 21 residues, 1–21, serve as a signal peptide directing secretion; that stretch reads MVVRYSLLMKVSFAILIFLVG. Cys-22 carries N-palmitoyl cysteine lipidation. A lipid anchor (S-diacylglycerol cysteine) is attached at Cys-22. Residues 31–53 form a disordered region; it reads DQYLTDPDISEQTKKPSRPIIDE. Residues 45–139 enclose the Fibronectin type-III domain; sequence KPSRPIIDEK…KIEFITLNEI (95 aa). The region spanning 282 to 536 is the Peptidase M66 domain; that stretch reads ELIIQNIDLG…QDWLKNGAVV (255 aa). His-432 contributes to the Zn(2+) binding site. Residue Glu-433 is part of the active site. His-436 and His-442 together coordinate Zn(2+).

Zn(2+) is required as a cofactor.

The protein localises to the cell membrane. The protein is ToxR-activated gene A lipoprotein (tagA) of Vibrio cholerae serotype O1 (strain ATCC 39315 / El Tor Inaba N16961).